The chain runs to 235 residues: Large ribosomal subunit protein uL1 (235 aa).

Belongs to the universal ribosomal protein uL1 family. Part of the 50S ribosomal subunit.

Its function is as follows. Binds directly to 23S rRNA. The L1 stalk is quite mobile in the ribosome, and is involved in E site tRNA release. In terms of biological role, protein L1 is also a translational repressor protein, it controls the translation of the L11 operon by binding to its mRNA. This is Large ribosomal subunit protein uL1 from Parasynechococcus marenigrum (strain WH8102).